We begin with the raw amino-acid sequence, 528 residues long: Na(+)/H(+) antiporter NhaB (528 aa).

11 helical membrane-spanning segments follow: residues 29-49 (LIIN…LLVI), 52-72 (IFTL…LLAI), 95-115 (VLLL…LLLF), 139-159 (AFLS…AVAV), 203-223 (LLMH…VGEP), 248-268 (VPVF…KIFG), 304-324 (AFIG…VGLI), 349-369 (EEAL…AVII), 390-410 (LVIF…VFVG), 448-468 (ATPN…APLI), and 476-496 (VWMA…AIEL).

Belongs to the NhaB Na(+)/H(+) (TC 2.A.34) antiporter family.

It is found in the cell inner membrane. It catalyses the reaction 2 Na(+)(in) + 3 H(+)(out) = 2 Na(+)(out) + 3 H(+)(in). Na(+)/H(+) antiporter that extrudes sodium in exchange for external protons. This Shewanella woodyi (strain ATCC 51908 / MS32) protein is Na(+)/H(+) antiporter NhaB.